Reading from the N-terminus, the 249-residue chain is 2,3-bisphosphoglycerate-dependent phosphoglycerate mutase (249 aa).

Substrate is bound by residues 9 to 16 (RHGQSQWN), 22 to 23 (TG), Arg-61, 88 to 91 (ERHY), Lys-99, 115 to 116 (RR), and 184 to 185 (GN). His-10 (tele-phosphohistidine intermediate) is an active-site residue. Glu-88 (proton donor/acceptor) is an active-site residue.

Belongs to the phosphoglycerate mutase family. BPG-dependent PGAM subfamily. Homodimer.

It carries out the reaction (2R)-2-phosphoglycerate = (2R)-3-phosphoglycerate. It functions in the pathway carbohydrate degradation; glycolysis; pyruvate from D-glyceraldehyde 3-phosphate: step 3/5. Functionally, catalyzes the interconversion of 2-phosphoglycerate and 3-phosphoglycerate. The sequence is that of 2,3-bisphosphoglycerate-dependent phosphoglycerate mutase from Stenotrophomonas maltophilia (strain K279a).